The primary structure comprises 254 residues: Dihydroorotate dehydrogenase B (NAD(+)), electron transfer subunit (254 aa).

In terms of domain architecture, FAD-binding FR-type spans 1–99 (MLQTEMKVIQ…LGPLGKGFDI (99 aa)). FAD-binding positions include 50–53 (RPIS), 67–69 (LYR), and 74–75 (GT). Residues cysteine 218, cysteine 223, cysteine 226, and cysteine 241 each contribute to the [2Fe-2S] cluster site.

It belongs to the PyrK family. In terms of assembly, heterotetramer of 2 PyrK and 2 PyrD type B subunits. Requires [2Fe-2S] cluster as cofactor. The cofactor is FAD.

Its pathway is pyrimidine metabolism; UMP biosynthesis via de novo pathway; orotate from (S)-dihydroorotate (NAD(+) route): step 1/1. Functionally, responsible for channeling the electrons from the oxidation of dihydroorotate from the FMN redox center in the PyrD type B subunit to the ultimate electron acceptor NAD(+). The chain is Dihydroorotate dehydrogenase B (NAD(+)), electron transfer subunit from Listeria monocytogenes serovar 1/2a (strain ATCC BAA-679 / EGD-e).